The primary structure comprises 102 residues: NADH-quinone oxidoreductase subunit K 1 (102 aa).

Transmembrane regions (helical) follow at residues 5–25 (FEHV…CVLV), 30–50 (LIML…AFVG), and 65–85 (LVIM…VVYL).

It belongs to the complex I subunit 4L family. NDH-1 is composed of 14 different subunits. Subunits NuoA, H, J, K, L, M, N constitute the membrane sector of the complex.

It is found in the cell inner membrane. It catalyses the reaction a quinone + NADH + 5 H(+)(in) = a quinol + NAD(+) + 4 H(+)(out). In terms of biological role, NDH-1 shuttles electrons from NADH, via FMN and iron-sulfur (Fe-S) centers, to quinones in the respiratory chain. The immediate electron acceptor for the enzyme in this species is believed to be ubiquinone. Couples the redox reaction to proton translocation (for every two electrons transferred, four hydrogen ions are translocated across the cytoplasmic membrane), and thus conserves the redox energy in a proton gradient. This Geobacter metallireducens (strain ATCC 53774 / DSM 7210 / GS-15) protein is NADH-quinone oxidoreductase subunit K 1.